The sequence spans 77 residues: MLIKVKTLTGKEIELDIEPNDRVERIKEKVEEKEGIPPPQQRLIFAGKQMNDDKTAADYKVLGGSVLHLVLALRGGF.

The tract at residues 70–72 (VLA) is interaction with uba-3. Residue Gly76 forms a Glycyl lysine isopeptide (Gly-Lys) (interchain with K-? in acceptor proteins) linkage. Phe77 is a propeptide.

It belongs to the ubiquitin family. In terms of assembly, interacts with dcn-1. Covalently attached to cullins. May interact with atx-3. In terms of processing, cleavage of precursor form is necessary for function.

The protein resides in the nucleus. It localises to the cytoplasm. In terms of biological role, ubiquitin-like protein which plays an important role in cell cycle control and embryogenesis. Covalent attachment to its substrates requires prior activation by the E1 complex uba-3-ula-1 and linkage to the E2 enzyme ubc-12. Attachment of ned-8 to cullins activates their associated E3 ubiquitin ligase activity, and thus promotes polyubiquitination and proteasomal degradation of cyclins and other regulatory proteins. The chain is Ubiquitin-like protein NEDD8 (ned-8) from Caenorhabditis elegans.